The chain runs to 318 residues: tRNA-modifying protein YgfZ (318 aa).

Folate-binding residues include W28 and W182.

This sequence belongs to the tRNA-modifying YgfZ family.

Its subcellular location is the cytoplasm. Functionally, folate-binding protein involved in regulating the level of ATP-DnaA and in the modification of some tRNAs. It is probably a key factor in regulatory networks that act via tRNA modification, such as initiation of chromosomal replication. The protein is tRNA-modifying protein YgfZ of Aliivibrio fischeri (strain ATCC 700601 / ES114) (Vibrio fischeri).